A 179-amino-acid polypeptide reads, in one-letter code: Large ribosomal subunit protein uL5 (179 aa).

It belongs to the universal ribosomal protein uL5 family. As to quaternary structure, part of the 50S ribosomal subunit; part of the 5S rRNA/L5/L18/L25 subcomplex. Contacts the 5S rRNA and the P site tRNA. Forms a bridge to the 30S subunit in the 70S ribosome.

Functionally, this is one of the proteins that bind and probably mediate the attachment of the 5S RNA into the large ribosomal subunit, where it forms part of the central protuberance. In the 70S ribosome it contacts protein S13 of the 30S subunit (bridge B1b), connecting the 2 subunits; this bridge is implicated in subunit movement. Contacts the P site tRNA; the 5S rRNA and some of its associated proteins might help stabilize positioning of ribosome-bound tRNAs. The protein is Large ribosomal subunit protein uL5 of Rickettsia rickettsii (strain Iowa).